Here is a 326-residue protein sequence, read N- to C-terminus: Thioredoxin reductase (326 aa).

55–62 (EGPEPGGQ) serves as a coordination point for FAD. Cys156 and Cys159 form a disulfide bridge. Residue 298 to 307 (DVSNKLYAQA) participates in FAD binding.

The protein belongs to the class-II pyridine nucleotide-disulfide oxidoreductase family. As to quaternary structure, homodimer. The cofactor is FAD.

The protein resides in the cytoplasm. It carries out the reaction [thioredoxin]-dithiol + NADP(+) = [thioredoxin]-disulfide + NADPH + H(+). This is Thioredoxin reductase (trxB) from Borreliella burgdorferi (strain ATCC 35210 / DSM 4680 / CIP 102532 / B31) (Borrelia burgdorferi).